The following is a 359-amino-acid chain: Phospho-N-acetylmuramoyl-pentapeptide-transferase (359 aa).

The next 10 helical transmembrane spans lie at 3 to 23, 55 to 75, 80 to 100, 117 to 137, 156 to 176, 187 to 207, 231 to 251, 255 to 275, 280 to 300, and 334 to 354; these read QILI…PALI, VAII…GLAF, ISAS…VGFL, TAKT…ALGF, IATV…VVSA, LDGL…LITF, LAIV…WNAA, IFMG…ISVT, ILAV…VLQI, and FWLL…GEWL.

This sequence belongs to the glycosyltransferase 4 family. MraY subfamily. It depends on Mg(2+) as a cofactor.

It localises to the cell membrane. The enzyme catalyses UDP-N-acetyl-alpha-D-muramoyl-L-alanyl-gamma-D-glutamyl-meso-2,6-diaminopimeloyl-D-alanyl-D-alanine + di-trans,octa-cis-undecaprenyl phosphate = di-trans,octa-cis-undecaprenyl diphospho-N-acetyl-alpha-D-muramoyl-L-alanyl-D-glutamyl-meso-2,6-diaminopimeloyl-D-alanyl-D-alanine + UMP. It participates in cell wall biogenesis; peptidoglycan biosynthesis. Its function is as follows. Catalyzes the initial step of the lipid cycle reactions in the biosynthesis of the cell wall peptidoglycan: transfers peptidoglycan precursor phospho-MurNAc-pentapeptide from UDP-MurNAc-pentapeptide onto the lipid carrier undecaprenyl phosphate, yielding undecaprenyl-pyrophosphoryl-MurNAc-pentapeptide, known as lipid I. The chain is Phospho-N-acetylmuramoyl-pentapeptide-transferase from Mycolicibacterium paratuberculosis (strain ATCC BAA-968 / K-10) (Mycobacterium paratuberculosis).